Here is a 299-residue protein sequence, read N- to C-terminus: Oxygen-dependent coproporphyrinogen-III oxidase (299 aa).

Ser92 provides a ligand contact to substrate. The a divalent metal cation site is built by His96 and His106. The active-site Proton donor is His106. Asn108–Arg110 is a substrate binding site. Positions 145 and 175 each coordinate a divalent metal cation. The interval Tyr239–Glu274 is important for dimerization. Gly257–Arg259 serves as a coordination point for substrate.

This sequence belongs to the aerobic coproporphyrinogen-III oxidase family. Homodimer. Requires a divalent metal cation as cofactor.

It localises to the cytoplasm. It catalyses the reaction coproporphyrinogen III + O2 + 2 H(+) = protoporphyrinogen IX + 2 CO2 + 2 H2O. It participates in porphyrin-containing compound metabolism; protoporphyrin-IX biosynthesis; protoporphyrinogen-IX from coproporphyrinogen-III (O2 route): step 1/1. Functionally, involved in the heme biosynthesis. Catalyzes the aerobic oxidative decarboxylation of propionate groups of rings A and B of coproporphyrinogen-III to yield the vinyl groups in protoporphyrinogen-IX. This is Oxygen-dependent coproporphyrinogen-III oxidase from Xanthomonas euvesicatoria pv. vesicatoria (strain 85-10) (Xanthomonas campestris pv. vesicatoria).